We begin with the raw amino-acid sequence, 419 residues long: UDP-N-acetylglucosamine 1-carboxyvinyltransferase (419 aa).

A phosphoenolpyruvate-binding site is contributed by 23–24 (KN). Residue arginine 92 participates in UDP-N-acetyl-alpha-D-glucosamine binding. Cysteine 116 functions as the Proton donor in the catalytic mechanism. The residue at position 116 (cysteine 116) is a 2-(S-cysteinyl)pyruvic acid O-phosphothioketal. Residues 121–125 (RPVDL), 161–164 (KVSV), aspartate 306, and isoleucine 328 each bind UDP-N-acetyl-alpha-D-glucosamine.

Belongs to the EPSP synthase family. MurA subfamily.

Its subcellular location is the cytoplasm. The enzyme catalyses phosphoenolpyruvate + UDP-N-acetyl-alpha-D-glucosamine = UDP-N-acetyl-3-O-(1-carboxyvinyl)-alpha-D-glucosamine + phosphate. Its pathway is cell wall biogenesis; peptidoglycan biosynthesis. Functionally, cell wall formation. Adds enolpyruvyl to UDP-N-acetylglucosamine. This is UDP-N-acetylglucosamine 1-carboxyvinyltransferase from Vibrio cholerae serotype O1 (strain ATCC 39541 / Classical Ogawa 395 / O395).